Reading from the N-terminus, the 192-residue chain is HTH-type transcriptional regulator Hpr (192 aa).

The HTH marR-type domain occupies 12–156 (SIIFSHKFAQ…LLSIVRHVYG (145 aa)). A DNA-binding region (H-T-H motif) is located at residues 62-85 (ISDIAKFGVMHVSTAFNFSKKLEE).

As to quaternary structure, homodimer.

Its function is as follows. Negative regulator of protease production and sporulation. This chain is HTH-type transcriptional regulator Hpr, found in Halalkalibacterium halodurans (strain ATCC BAA-125 / DSM 18197 / FERM 7344 / JCM 9153 / C-125) (Bacillus halodurans).